We begin with the raw amino-acid sequence, 81 residues long: ATP synthase subunit C, cyanelle (81 aa).

2 consecutive transmembrane segments (helical) span residues A7–G27 and L57–A77.

The protein belongs to the ATPase C chain family. F-type ATPases have 2 components, F(1) - the catalytic core - and F(0) - the membrane proton channel. F(1) has five subunits: alpha(3), beta(3), gamma(1), delta(1), epsilon(1). F(0) has four main subunits: a(1), b(1), b'(1) and c(10-14). The alpha and beta chains form an alternating ring which encloses part of the gamma chain. F(1) is attached to F(0) by a central stalk formed by the gamma and epsilon chains, while a peripheral stalk is formed by the delta, b and b' chains.

It localises to the plastid. Its subcellular location is the cyanelle thylakoid membrane. Its function is as follows. F(1)F(0) ATP synthase produces ATP from ADP in the presence of a proton or sodium gradient. F-type ATPases consist of two structural domains, F(1) containing the extramembraneous catalytic core and F(0) containing the membrane proton channel, linked together by a central stalk and a peripheral stalk. During catalysis, ATP synthesis in the catalytic domain of F(1) is coupled via a rotary mechanism of the central stalk subunits to proton translocation. In terms of biological role, key component of the F(0) channel; it plays a direct role in translocation across the membrane. A homomeric c-ring of between 10-14 subunits forms the central stalk rotor element with the F(1) delta and epsilon subunits. The chain is ATP synthase subunit C, cyanelle from Cyanophora paradoxa.